Reading from the N-terminus, the 430-residue chain is tRNA(Ile)-lysidine synthase (430 aa).

An ATP-binding site is contributed by 24–29 (SGGLDS).

Belongs to the tRNA(Ile)-lysidine synthase family.

Its subcellular location is the cytoplasm. The catalysed reaction is cytidine(34) in tRNA(Ile2) + L-lysine + ATP = lysidine(34) in tRNA(Ile2) + AMP + diphosphate + H(+). Ligates lysine onto the cytidine present at position 34 of the AUA codon-specific tRNA(Ile) that contains the anticodon CAU, in an ATP-dependent manner. Cytidine is converted to lysidine, thus changing the amino acid specificity of the tRNA from methionine to isoleucine. The polypeptide is tRNA(Ile)-lysidine synthase (Haemophilus influenzae (strain ATCC 51907 / DSM 11121 / KW20 / Rd)).